A 160-amino-acid polypeptide reads, in one-letter code: MIELEVFPHRYLKAETTENFLNSAYSFSTVERVVIHGESLPKKVGYGPAKGSPVNHSEKKEITVKGVPVELNLQVGRLWVLLKDESEIEKIDELCKELFPFGYRLTKGKFLRDTPTVSDFIKYGESAVENIDPKLLSATDPRSKFQNSVKMIPKSENSTE.

As to quaternary structure, MCR is composed of three subunits: alpha, beta, and gamma. The function of proteins C and D is not known.

The chain is Methyl-coenzyme M reductase operon protein D (mcrD) from Methanococcus vannielii.